We begin with the raw amino-acid sequence, 580 residues long: Laccase-20 (580 aa).

The N-terminal stretch at 1–23 is a signal peptide; that stretch reads MVASLLCTVAVAVLAVAAVGGEA. 2 consecutive Plastocyanin-like domains span residues 31–147 and 156–310; these read VVHE…PRDG and KDVP…YTSA. 2 N-linked (GlcNAc...) asparagine glycosylation sites follow: N36 and N42. Residues H81 and H83 each coordinate Cu cation. Residue N115 is glycosylated (N-linked (GlcNAc...) asparagine). H126 and H128 together coordinate Cu cation. N-linked (GlcNAc...) asparagine glycans are attached at residues N200, N339, N392, N429, and N460. The Plastocyanin-like 3 domain maps to 419-561; it reads DFPVRPPRPY…ATAFIVEDGP (143 aa). Cu cation is bound by residues N478, H481, H483, H540, C541, H542, H546, and M551. The segment at 560–580 is disordered; sequence GPTPETSLPPPPPEFKRCDAS.

This sequence belongs to the multicopper oxidase family. Cu cation serves as cofactor.

The protein resides in the secreted. It is found in the extracellular space. It localises to the apoplast. The enzyme catalyses 4 hydroquinone + O2 = 4 benzosemiquinone + 2 H2O. Lignin degradation and detoxification of lignin-derived products. This is Laccase-20 (LAC20) from Oryza sativa subsp. indica (Rice).